The chain runs to 321 residues: Ras association domain-containing protein 4 (321 aa).

Positions 79–159 are disordered; the sequence is HLPSTSWMPR…RPKCRAPGEA (81 aa). The segment covering 98-110 has biased composition (polar residues); the sequence is SPQNGNITAQGPS. Position 141 is a phosphoserine (Ser141). The 89-residue stretch at 174–262 folds into the Ras-associating domain; the sequence is YNHKTSVFTP…ARIFLMEADL (89 aa). The SARAH domain occupies 270 to 317; that stretch reads VAQYIKFEMPVLDSFVEKLKEEEEREIIKLTMKFQALRLTMLQRLEQL.

As to quaternary structure, interacts directly with activated KRAS in a GTP-dependent manner. Widely expressed. Frequently down-regulated in tumor cell lines.

Its function is as follows. Potential tumor suppressor. May act as a KRAS effector protein. May promote apoptosis and cell cycle arrest. In Homo sapiens (Human), this protein is Ras association domain-containing protein 4 (RASSF4).